A 166-amino-acid chain; its full sequence is MQTHIKINRGELLRGIEQDHTRQLPDFRPGDTVRVDTKVREGNRTRSQAFEGVVIAINGSGSRKSFTVRKISFGEGVERVFPFASPLVNQVTIVERGKVRRAKLYYLRELRGKAARIKSDRSRVMKDAARAQQDKANASASQAAAAQADVTVISAAPEVAPETQGE.

This sequence belongs to the bacterial ribosomal protein bL19 family. In terms of assembly, part of the 50S ribosomal subunit. Forms a cluster with proteins L3 and L14.

In terms of biological role, this protein is located at the 30S-50S ribosomal subunit interface and may play a role in the structure and function of the aminoacyl-tRNA binding site. Binds the 23S rRNA. This Deinococcus radiodurans (strain ATCC 13939 / DSM 20539 / JCM 16871 / CCUG 27074 / LMG 4051 / NBRC 15346 / NCIMB 9279 / VKM B-1422 / R1) protein is Large ribosomal subunit protein bL19 (rplS).